We begin with the raw amino-acid sequence, 110 residues long: Large ribosomal subunit protein uL22 (110 aa).

This sequence belongs to the universal ribosomal protein uL22 family. Part of the 50S ribosomal subunit.

Its function is as follows. This protein binds specifically to 23S rRNA; its binding is stimulated by other ribosomal proteins, e.g. L4, L17, and L20. It is important during the early stages of 50S assembly. It makes multiple contacts with different domains of the 23S rRNA in the assembled 50S subunit and ribosome. The globular domain of the protein is located near the polypeptide exit tunnel on the outside of the subunit, while an extended beta-hairpin is found that lines the wall of the exit tunnel in the center of the 70S ribosome. The protein is Large ribosomal subunit protein uL22 of Acidovorax ebreus (strain TPSY) (Diaphorobacter sp. (strain TPSY)).